A 482-amino-acid polypeptide reads, in one-letter code: Glutamyl-tRNA(Gln) amidotransferase subunit A (482 aa).

Active-site charge relay system residues include K74 and S149. S173 acts as the Acyl-ester intermediate in catalysis.

The protein belongs to the amidase family. GatA subfamily. In terms of assembly, heterotrimer of A, B and C subunits.

It catalyses the reaction L-glutamyl-tRNA(Gln) + L-glutamine + ATP + H2O = L-glutaminyl-tRNA(Gln) + L-glutamate + ADP + phosphate + H(+). Its function is as follows. Allows the formation of correctly charged Gln-tRNA(Gln) through the transamidation of misacylated Glu-tRNA(Gln) in organisms which lack glutaminyl-tRNA synthetase. The reaction takes place in the presence of glutamine and ATP through an activated gamma-phospho-Glu-tRNA(Gln). The sequence is that of Glutamyl-tRNA(Gln) amidotransferase subunit A from Prochlorococcus marinus (strain AS9601).